The chain runs to 257 residues: uncharacterized protein (257 aa).

7–14 serves as a coordination point for ATP; it reads GKGGVGKT.

It to M.jannaschii MJ0084 and MJ0685.

This is an uncharacterized protein from Methanocaldococcus jannaschii (strain ATCC 43067 / DSM 2661 / JAL-1 / JCM 10045 / NBRC 100440) (Methanococcus jannaschii).